We begin with the raw amino-acid sequence, 161 residues long: Glycine-rich RNA-binding protein blt801 (161 aa).

Residues 6-84 (YRCFVGGLRW…RNITVNEAQS (79 aa)) enclose the RRM domain. The disordered stretch occupies residues 72–161 (LDGRNITVNE…GGSGGGNWRE (90 aa)). Ser-87 carries the post-translational modification Phosphoserine; by PKA. The segment covering 89 to 161 (GGGGFGGGGG…GGSGGGNWRE (73 aa)) has biased composition (gly residues).

Its function is as follows. Binds single-stranded DNA and homoribopolymers of guanine, uracil and adenine, but not cytosine. Also binds RNA, with a preference for RNA containing a high proportion of adenine within an open loop structure. Possibly has a role in RNA transcription or processing during stress. This Hordeum vulgare (Barley) protein is Glycine-rich RNA-binding protein blt801.